A 65-amino-acid polypeptide reads, in one-letter code: Large ribosomal subunit protein bL33c (65 aa).

It belongs to the bacterial ribosomal protein bL33 family.

The protein resides in the plastid. Its subcellular location is the chloroplast. This is Large ribosomal subunit protein bL33c from Chaetosphaeridium globosum (Charophycean green alga).